Here is a 775-residue protein sequence, read N- to C-terminus: Ubiquitin carboxyl-terminal hydrolase 14 (775 aa).

The UBP-type 1; degenerate zinc finger occupies Met1–Pro108. The Zn(2+) site is built by Cys25, Cys28, Cys41, Cys44, Cys49, His56, His60, His66, Cys153, His155, Cys174, Cys177, Cys186, Cys189, Cys194, His207, His211, His217, Cys236, and Cys239. Residues Thr151–Ile259 form a UBP-type 2 zinc finger. The region spanning Thr300–Leu774 is the USP domain. Cys309 acts as the Nucleophile in catalysis. The residue at position 456 (Ser456) is a Phosphoserine. 2 consecutive UBA domains span residues Glu576–His617 and Ser639–His679. His730 functions as the Proton acceptor in the catalytic mechanism.

Belongs to the peptidase C19 family.

The enzyme catalyses Thiol-dependent hydrolysis of ester, thioester, amide, peptide and isopeptide bonds formed by the C-terminal Gly of ubiquitin (a 76-residue protein attached to proteins as an intracellular targeting signal).. This chain is Ubiquitin carboxyl-terminal hydrolase 14 (ubp14), found in Schizosaccharomyces pombe (strain 972 / ATCC 24843) (Fission yeast).